The following is a 60-amino-acid chain: Metallothionein-like protein EMB30 (60 aa).

The protein belongs to the metallothionein superfamily. Type 15 family.

Its function is as follows. Metallothioneins have a high content of cysteine residues that bind various heavy metals. The chain is Metallothionein-like protein EMB30 (EMB30) from Picea glauca (White spruce).